Reading from the N-terminus, the 277-residue chain is Diaminopimelate epimerase (277 aa).

Substrate is bound by residues N13, Q46, and N66. The active-site Proton donor is the C75. Residues G76–N77, N160, N193, and E211–R212 contribute to the substrate site. C220 (proton acceptor) is an active-site residue. Residue G221–S222 coordinates substrate.

This sequence belongs to the diaminopimelate epimerase family. Homodimer.

It localises to the cytoplasm. The catalysed reaction is (2S,6S)-2,6-diaminopimelate = meso-2,6-diaminopimelate. The protein operates within amino-acid biosynthesis; L-lysine biosynthesis via DAP pathway; DL-2,6-diaminopimelate from LL-2,6-diaminopimelate: step 1/1. Its function is as follows. Catalyzes the stereoinversion of LL-2,6-diaminopimelate (L,L-DAP) to meso-diaminopimelate (meso-DAP), a precursor of L-lysine and an essential component of the bacterial peptidoglycan. In Legionella pneumophila subsp. pneumophila (strain Philadelphia 1 / ATCC 33152 / DSM 7513), this protein is Diaminopimelate epimerase.